Here is a 750-residue protein sequence, read N- to C-terminus: Photosystem I P700 chlorophyll a apoprotein A1 (750 aa).

The next 8 membrane-spanning stretches (helical) occupy residues 70–93, 156–179, 195–219, 291–309, 346–369, 385–411, 433–455, and 531–549; these read IFSA…FHGA, LYCT…FHYH, LNHH…HVSL, IAHH…GHMY, WHAQ…HHMY, LSLF…IFMV, AIIS…LYIH, and FLVH…LILL. The [4Fe-4S] cluster site is built by Cys-573 and Cys-582. 2 helical membrane-spanning segments follow: residues 589 to 610 and 664 to 686; these read HVFL…HFSW and LSAY…MFLF. His-675 contributes to the chlorophyll a' binding site. Residues Met-683 and Tyr-691 each coordinate chlorophyll a. Trp-692 serves as a coordination point for phylloquinone. Residues 724-744 traverse the membrane as a helical segment; that stretch reads AVGVTHYLLGGIATTWAFFLA.

The protein belongs to the PsaA/PsaB family. The PsaA/B heterodimer binds the P700 chlorophyll special pair and subsequent electron acceptors. PSI consists of a core antenna complex that captures photons, and an electron transfer chain that converts photonic excitation into a charge separation. The eukaryotic PSI reaction center is composed of at least 11 subunits. Requires P700 is a chlorophyll a/chlorophyll a' dimer, A0 is one or more chlorophyll a, A1 is one or both phylloquinones and FX is a shared 4Fe-4S iron-sulfur center. as cofactor.

The protein resides in the plastid. It localises to the chloroplast thylakoid membrane. The enzyme catalyses reduced [plastocyanin] + hnu + oxidized [2Fe-2S]-[ferredoxin] = oxidized [plastocyanin] + reduced [2Fe-2S]-[ferredoxin]. In terms of biological role, psaA and PsaB bind P700, the primary electron donor of photosystem I (PSI), as well as the electron acceptors A0, A1 and FX. PSI is a plastocyanin-ferredoxin oxidoreductase, converting photonic excitation into a charge separation, which transfers an electron from the donor P700 chlorophyll pair to the spectroscopically characterized acceptors A0, A1, FX, FA and FB in turn. Oxidized P700 is reduced on the lumenal side of the thylakoid membrane by plastocyanin. In Lotus japonicus (Lotus corniculatus var. japonicus), this protein is Photosystem I P700 chlorophyll a apoprotein A1.